Here is a 203-residue protein sequence, read N- to C-terminus: Acireductone dioxygenase 3 (203 aa).

Residues His96, His98, Glu102, and His141 each contribute to the Fe(2+) site. Residues His96, His98, Glu102, and His141 each coordinate Ni(2+).

The protein belongs to the acireductone dioxygenase (ARD) family. Requires Fe(2+) as cofactor. Ni(2+) serves as cofactor.

Its subcellular location is the cytoplasm. It is found in the nucleus. It catalyses the reaction 1,2-dihydroxy-5-(methylsulfanyl)pent-1-en-3-one + O2 = 4-methylsulfanyl-2-oxobutanoate + formate + 2 H(+). The enzyme catalyses 1,2-dihydroxy-5-(methylsulfanyl)pent-1-en-3-one + O2 = 3-(methylsulfanyl)propanoate + CO + formate + 2 H(+). The protein operates within amino-acid biosynthesis; L-methionine biosynthesis via salvage pathway; L-methionine from S-methyl-5-thio-alpha-D-ribose 1-phosphate: step 5/6. Functionally, catalyzes 2 different reactions between oxygen and the acireductone 1,2-dihydroxy-3-keto-5-methylthiopentene (DHK-MTPene) depending upon the metal bound in the active site. Fe-containing acireductone dioxygenase (Fe-ARD) produces formate and 2-keto-4-methylthiobutyrate (KMTB), the alpha-ketoacid precursor of methionine in the methionine recycle pathway. Ni-containing acireductone dioxygenase (Ni-ARD) produces methylthiopropionate, carbon monoxide and formate, and does not lie on the methionine recycle pathway. The polypeptide is Acireductone dioxygenase 3 (Physcomitrium patens (Spreading-leaved earth moss)).